The primary structure comprises 62 residues: Sec-independent protein translocase protein TatAc (62 aa).

The chain crosses the membrane as a helical span at residues 8–28; sequence ILVILFVGFLVFGPDKLPALG.

Belongs to the TatA/E family. In terms of assembly, forms a complex with TatC.

The protein resides in the cell membrane. Functionally, part of the twin-arginine translocation (Tat) system that transports large folded proteins containing a characteristic twin-arginine motif in their signal peptide across membranes. TatA could form the protein-conducting channel of the Tat system. This chain is Sec-independent protein translocase protein TatAc, found in Bacillus subtilis (strain 168).